Reading from the N-terminus, the 399-residue chain is Acetate kinase (399 aa).

Asn-7 provides a ligand contact to Mg(2+). Lys-14 contacts ATP. Arg-89 is a binding site for substrate. The active-site Proton donor/acceptor is Asp-146. ATP contacts are provided by residues 206-210 (HLGNG), 280-282 (DMR), and 328-332 (GIGEN). Position 382 (Glu-382) interacts with Mg(2+).

It belongs to the acetokinase family. As to quaternary structure, homodimer. Requires Mg(2+) as cofactor. It depends on Mn(2+) as a cofactor.

It localises to the cytoplasm. It carries out the reaction acetate + ATP = acetyl phosphate + ADP. Its pathway is metabolic intermediate biosynthesis; acetyl-CoA biosynthesis; acetyl-CoA from acetate: step 1/2. In terms of biological role, catalyzes the formation of acetyl phosphate from acetate and ATP. Can also catalyze the reverse reaction. In Campylobacter fetus subsp. fetus (strain 82-40), this protein is Acetate kinase.